We begin with the raw amino-acid sequence, 132 residues long: Large ribosomal subunit protein bL17 (132 aa).

It belongs to the bacterial ribosomal protein bL17 family. In terms of assembly, part of the 50S ribosomal subunit. Contacts protein L32.

This Marinobacter nauticus (strain ATCC 700491 / DSM 11845 / VT8) (Marinobacter aquaeolei) protein is Large ribosomal subunit protein bL17.